The following is a 61-amino-acid chain: Putative defensin-like protein 72 (61 aa).

Intrachain disulfides connect Cys-21–Cys-59, Cys-25–Cys-48, Cys-34–Cys-57, and Cys-38–Cys-58.

The protein belongs to the DEFL family.

This chain is Putative defensin-like protein 72, found in Arabidopsis thaliana (Mouse-ear cress).